The chain runs to 281 residues: Lipoyl synthase (281 aa).

[4Fe-4S] cluster is bound by residues C35, C40, C46, C61, C65, C68, and S274. In terms of domain architecture, Radical SAM core spans 47-263 (FGCGQATFLI…RDEALALGFR (217 aa)).

The protein belongs to the radical SAM superfamily. Lipoyl synthase family. It depends on [4Fe-4S] cluster as a cofactor.

The protein localises to the cytoplasm. It catalyses the reaction [[Fe-S] cluster scaffold protein carrying a second [4Fe-4S](2+) cluster] + N(6)-octanoyl-L-lysyl-[protein] + 2 oxidized [2Fe-2S]-[ferredoxin] + 2 S-adenosyl-L-methionine + 4 H(+) = [[Fe-S] cluster scaffold protein] + N(6)-[(R)-dihydrolipoyl]-L-lysyl-[protein] + 4 Fe(3+) + 2 hydrogen sulfide + 2 5'-deoxyadenosine + 2 L-methionine + 2 reduced [2Fe-2S]-[ferredoxin]. Its pathway is protein modification; protein lipoylation via endogenous pathway; protein N(6)-(lipoyl)lysine from octanoyl-[acyl-carrier-protein]: step 2/2. Functionally, catalyzes the radical-mediated insertion of two sulfur atoms into the C-6 and C-8 positions of the octanoyl moiety bound to the lipoyl domains of lipoate-dependent enzymes, thereby converting the octanoylated domains into lipoylated derivatives. The polypeptide is Lipoyl synthase (Trichlorobacter lovleyi (strain ATCC BAA-1151 / DSM 17278 / SZ) (Geobacter lovleyi)).